A 70-amino-acid chain; its full sequence is Large ribosomal subunit protein bL31 (70 aa).

Zn(2+) contacts are provided by cysteine 16, cysteine 18, cysteine 37, and cysteine 40.

It belongs to the bacterial ribosomal protein bL31 family. Type A subfamily. Part of the 50S ribosomal subunit. The cofactor is Zn(2+).

Functionally, binds the 23S rRNA. The chain is Large ribosomal subunit protein bL31 from Shewanella sediminis (strain HAW-EB3).